The primary structure comprises 2193 residues: Genome polyprotein (2193 aa).

Residues 1–22 (MGSQVSTQRSGSHENSNSATEG) are disordered. Gly-2 is lipidated: N-myristoyl glycine; by host. Topologically, residues 2–1503 (GSQVSTQRSG…HLNRAVLVMQ (1502 aa)) are cytoplasmic. Amphipathic alpha-helix regions lie at residues 566 to 588 (GDRV…LTQA) and 568 to 588 (RVAD…LTQA). Active-site for protease 2A activity residues include His-883 and Asp-901. The Zn(2+) site is built by Cys-918 and Cys-920. The active-site For protease 2A activity is the Cys-972. 2 residues coordinate Zn(2+): Cys-978 and His-980. Residues 1112-1184 (SASWLKKFND…EQSAASQEDL (73 aa)) are membrane-binding. Residues 1112–1250 (SASWLKKFND…SPGTGKSLAT (139 aa)) are oligomerization. The segment at 1133–1137 (SNKIS) is RNA-binding. Residues 1216 to 1374 (EKRMNNYMQF…YKTDLGRLDA (159 aa)) form the SF3 helicase domain. ATP is bound at residue 1240 to 1247 (GSPGTGKS). Zn(2+)-binding residues include Cys-1381, Cys-1392, Ser-1393, and Cys-1397. A C4-type; degenerate zinc finger spans residues 1381-1397 (CSENNTANFKRCSPLVC). The RNA-binding stretch occupies residues 1424–1431 (EYSNRSAI). The interval 1435–1440 (IEALFQ) is oligomerization. The stretch at 1504-1519 (SIATVVAVVSLVYVIY) is an intramembrane region. At 1520–2193 (KLFAGFQGAY…NLRRNWLELF (674 aa)) the chain is on the cytoplasmic side. An O-(5'-phospho-RNA)-tyrosine modification is found at Tyr-1529. The 179-residue stretch at 1549-1727 (GPSLDFALSL…FCAGLKRSYF (179 aa)) folds into the Peptidase C3 domain. Catalysis depends on for protease 3C activity residues His-1588, Glu-1619, and Cys-1695. Residues 1958–2073 (GSLFAFDYSG…ASYPFPIDCL (116 aa)) enclose the RdRp catalytic domain. 2 residues coordinate Mg(2+): Asp-1964 and Asp-2060.

This sequence belongs to the picornaviruses polyprotein family. As to quaternary structure, interacts with capsid protein VP1 and capsid protein VP3 to form heterotrimeric protomers. In terms of assembly, interacts with capsid protein VP0, and capsid protein VP3 to form heterotrimeric protomers. Five protomers subsequently associate to form pentamers which serve as building blocks for the capsid. Interacts with capsid protein VP2, capsid protein VP3 and capsid protein VP4 following cleavage of capsid protein VP0. Interacts with host SCARB2. Interacts with host ARF6; this interaction mediates viral endocytosis. Interacts with capsid protein VP1 and capsid protein VP3 in the mature capsid. Interacts with host SCARB2. As to quaternary structure, interacts with capsid protein VP0 and capsid protein VP1 to form heterotrimeric protomers. Five protomers subsequently associate to form pentamers which serve as building blocks for the capsid. Interacts with capsid protein VP4 in the mature capsid. Interacts with protein 2C; this interaction may be important for virion morphogenesis. In terms of assembly, interacts with capsid protein VP1 and capsid protein VP3. Homodimer. As to quaternary structure, interacts with host BAX; this interaction activates the mitochondrial apoptotic pathway. Interacts with host ILF2. In terms of assembly, homohexamer; forms a hexameric ring structure with 6-fold symmetry characteristic of AAA+ ATPases. Interacts (via N-terminus) with host RTN3 (via reticulon domain); this interaction is important for viral replication. Interacts with capsid protein VP3; this interaction may be important for virion morphogenesis. Interacts with protein 3CD. As to quaternary structure, homodimer. Interacts with host GBF1. Interacts (via GOLD domain) with host ACBD3 (via GOLD domain); this interaction allows the formation of a viral protein 3A/ACBD3 heterotetramer with a 2:2 stoichiometry, which will stimulate the recruitment of host PI4KB in order to synthesize PI4P at the viral RNA replication sites. In terms of assembly, interacts with RNA-directed RNA polymerase. Interacts with host IFIH1/MDA5; this interaction inhibits host IFIH1. Interacts with host RIGI. As to quaternary structure, interacts with protein 3AB and with RNA-directed RNA polymerase. In terms of assembly, interacts with Viral protein genome-linked and with protein 3CD. Mg(2+) is required as a cofactor. Post-translationally, specific enzymatic cleavages in vivo by the viral proteases yield processing intermediates and the mature proteins. In terms of processing, myristoylation is required for the formation of pentamers during virus assembly. Further assembly of 12 pentamers and a molecule of genomic RNA generates the provirion. During virion maturation, immature virions are rendered infectious following cleavage of VP0 into VP4 and VP2. This maturation seems to be an autocatalytic event triggered by the presence of RNA in the capsid and it is followed by a conformational change infectious virion. Post-translationally, myristoylation is required during RNA encapsidation and formation of the mature virus particle. In terms of processing, VPg is uridylylated by the polymerase into VPg-pUpU. This acts as a nucleotide-peptide primer for the genomic RNA replication.

The protein resides in the virion. It is found in the host cytoplasm. It localises to the host cytoplasmic vesicle membrane. The protein localises to the host nucleus. It carries out the reaction a ribonucleoside 5'-triphosphate + H2O = a ribonucleoside 5'-diphosphate + phosphate + H(+). The catalysed reaction is Selective cleavage of Tyr-|-Gly bond in the picornavirus polyprotein.. The enzyme catalyses RNA(n) + a ribonucleoside 5'-triphosphate = RNA(n+1) + diphosphate. It catalyses the reaction Selective cleavage of Gln-|-Gly bond in the poliovirus polyprotein. In other picornavirus reactions Glu may be substituted for Gln, and Ser or Thr for Gly.. Replication or transcription is subject to high level of random mutations by the nucleotide analog ribavirin. Forms an icosahedral capsid of pseudo T=3 symmetry with capsid proteins VP2 and VP3. The capsid is 300 Angstroms in diameter, composed of 60 copies of each capsid protein and enclosing the viral positive strand RNA genome. Capsid protein VP1 mainly forms the vertices of the capsid. Capsid protein VP1, together with VP2, interacts with host cell receptor SCARB2 to provide virion attachment to target host cells. This attachment induces virion internalization. This attachment induces virion internalization. After binding to its receptor, the capsid undergoes conformational changes. Capsid protein VP1 N-terminus (that contains an amphipathic alpha-helix) and capsid protein VP4 are externalized. Together, they shape a pore in the host membrane through which viral genome is translocated to host cell cytoplasm. Its function is as follows. Forms an icosahedral capsid of pseudo T=3 symmetry with capsid proteins VP2 and VP3. The capsid is 300 Angstroms in diameter, composed of 60 copies of each capsid protein and enclosing the viral positive strand RNA genome. Capsid protein VP2, together with VP1, interacts with host cell receptor SCARB2 to provide virion attachment to target host cells. In terms of biological role, forms an icosahedral capsid of pseudo T=3 symmetry with capsid proteins VP2 and VP3. The capsid is 300 Angstroms in diameter, composed of 60 copies of each capsid protein and enclosing the viral positive strand RNA genome. Functionally, lies on the inner surface of the capsid shell. After binding to the host receptor, the capsid undergoes conformational changes. Capsid protein VP4 is released, Capsid protein VP1 N-terminus is externalized, and together, they shape a pore in the host membrane through which the viral genome is translocated into the host cell cytoplasm. Component of immature procapsids, which is cleaved into capsid proteins VP4 and VP2 after maturation. Allows the capsid to remain inactive before the maturation step. Its function is as follows. Cysteine protease that cleaves viral polyprotein and specific host proteins. It is responsible for the autocatalytic cleavage between the P1 and P2 regions, which is the first cleavage occurring in the polyprotein. Also cleaves the host translation initiation factor EIF4G1, in order to shut down the capped cellular mRNA translation. Inhibits the host nucleus-cytoplasm protein and RNA trafficking by cleaving host members of the nuclear pores. Counteracts stress granule formation probably by antagonizing its assembly or promoting its dissassembly. Cleaves and inhibits host IFIH1/MDA5, thereby inhibiting the type-I IFN production and the establishment of the antiviral state. Cleaves and inhibits host MAVS, thereby inhibiting the type-I IFN production and the establishment of the antiviral state. In terms of biological role, plays an essential role in the virus replication cycle by acting as a viroporin. Creates a pore in the host endoplasmic reticulum and as a consequence releases Ca2+ in the cytoplasm of infected cell. In turn, high levels of cytoplasmic calcium may trigger membrane trafficking and transport of viral ER-associated proteins to viroplasms, sites of viral genome replication. Also activates the mitochondrial apoptotic pathway by activating host BAX. Functionally, induces and associates with structural rearrangements of intracellular membranes. Displays RNA-binding, nucleotide binding and NTPase activities. May play a role in virion morphogenesis and viral RNA encapsidation by interacting with the capsid protein VP3. Localizes the viral replication complex to the surface of membranous vesicles. Together with protein 3CD binds the Cis-Active RNA Element (CRE) which is involved in RNA synthesis initiation. Acts as a cofactor to stimulate the activity of 3D polymerase, maybe through a nucleid acid chaperone activity. Its function is as follows. Localizes the viral replication complex to the surface of membranous vesicles. It inhibits host cell endoplasmic reticulum-to-Golgi apparatus transport and causes the disassembly of the Golgi complex, possibly through GBF1 interaction. This would result in depletion of MHC, trail receptors and IFN receptors at the host cell surface. Plays an essential role in viral RNA replication by recruiting ACBD3 and PI4KB at the viral replication sites, thereby allowing the formation of the rearranged membranous structures where viral replication takes place. In terms of biological role, acts as a primer for viral RNA replication and remains covalently bound to viral genomic RNA. VPg is uridylylated prior to priming replication into VPg-pUpU. The oriI viral genomic sequence may act as a template for this. The VPg-pUpU is then used as primer on the genomic RNA poly(A) by the RNA-dependent RNA polymerase to replicate the viral genome. During genome replication, the VPg-RNA linkage is removed by the host TDP2, thereby accelerating replication. During the late stage of the replication cycle, host TDP2 is excluded from sites of viral RNA synthesis and encapsidation, allowing for the generation of progeny virions. Functionally, involved in the viral replication complex and viral polypeptide maturation. It exhibits protease activity with a specificity and catalytic efficiency that is different from protease 3C. Protein 3CD lacks polymerase activity. Protein 3CD binds to the 5'UTR of the viral genome. Major viral protease that mediates proteolytic processing of the polyprotein. Cleaves host EIF5B, contributing to host translation shutoff. Also cleaves host PABPC1, contributing to host translation shutoff. Disassembles host cytoplasmic stress granules by cleaving host G3BP1, although this effect is less prononced than the inhibition induced by protease 2A. Cleaves host RIGI and thus contributes to the inhibition of type I interferon production. Cleaves host IRF7 and thus contributes to the inhibition of type I interferon production. Cleaves host HNRNPA1 thereby increasing the translation of apoptosis protease activating factor APAF1, leading to apoptosis of the host cell. Cleaves host NLRP1, triggers host N-glycine-mediated degradation of the autoinhibitory NLRP1 N-terminal fragment. Its function is as follows. Replicates the viral genomic RNA on the surface of intracellular membranes. May form linear arrays of subunits that propagate along a strong head-to-tail interaction called interface-I. Covalently attaches UMP to a tyrosine of VPg, which is used to prime RNA synthesis. The positive stranded RNA genome is first replicated at virus induced membranous vesicles, creating a dsRNA genomic replication form. This dsRNA is then used as template to synthesize positive stranded RNA genomes. ss(+)RNA genomes are either translated, replicated or encapsidated. This Homo sapiens (Human) protein is Genome polyprotein.